The chain runs to 292 residues: Elongation factor Ts (292 aa).

Positions 80–83 (TDFV) are involved in Mg(2+) ion dislocation from EF-Tu.

The protein belongs to the EF-Ts family.

It is found in the cytoplasm. Its function is as follows. Associates with the EF-Tu.GDP complex and induces the exchange of GDP to GTP. It remains bound to the aminoacyl-tRNA.EF-Tu.GTP complex up to the GTP hydrolysis stage on the ribosome. The sequence is that of Elongation factor Ts from Pediococcus pentosaceus (strain ATCC 25745 / CCUG 21536 / LMG 10740 / 183-1w).